Here is a 510-residue protein sequence, read N- to C-terminus: NAD(P)H-quinone oxidoreductase subunit 2 A, chloroplastic (510 aa).

The next 13 helical transmembrane spans lie at 24-44 (LLLFDGSLIFPECILIFGLIL), 57-77 (IPWLYFISSTSLVMSITALLF), 99-119 (IFQFLILLCSTLCIPLSVEYI), 124-144 (MAITEFLLFILTATLGGMFLC), 149-169 (LITIFVAPECFSLCSYLLSGY), 183-203 (YLLMGGASSSILVHGFSWLYG), 227-247 (PGISIALIFITVGIGFKLSPA), 295-315 (WHLLLEILAILSMILGNLIAI), 323-343 (MLAYSSIGQIGYVIIGIIVGD), 354-374 (YMLFYISMNLGTFACIVSFGL), 395-415 (ALSLALCLLSLGGLPPLAGFF), 418-438 (LHLFWCGWQAGLYFLVSIGLL), and 484-504 (MIVCVIASTIPGISMNPIIAI).

The protein belongs to the complex I subunit 2 family. NDH is composed of at least 16 different subunits, 5 of which are encoded in the nucleus.

It localises to the plastid. The protein resides in the chloroplast thylakoid membrane. It catalyses the reaction a plastoquinone + NADH + (n+1) H(+)(in) = a plastoquinol + NAD(+) + n H(+)(out). The catalysed reaction is a plastoquinone + NADPH + (n+1) H(+)(in) = a plastoquinol + NADP(+) + n H(+)(out). Functionally, NDH shuttles electrons from NAD(P)H:plastoquinone, via FMN and iron-sulfur (Fe-S) centers, to quinones in the photosynthetic chain and possibly in a chloroplast respiratory chain. The immediate electron acceptor for the enzyme in this species is believed to be plastoquinone. Couples the redox reaction to proton translocation, and thus conserves the redox energy in a proton gradient. This Carica papaya (Papaya) protein is NAD(P)H-quinone oxidoreductase subunit 2 A, chloroplastic.